The chain runs to 343 residues: ATP-dependent 6-phosphofructokinase (343 aa).

Residues glycine 10, 73–74, and 103–106 contribute to the ATP site; these read RV and GEGT. Mg(2+) is bound at residue glutamate 104. Substrate is bound by residues 126 to 128, arginine 163, 170 to 172, glutamate 223, arginine 267, and 273 to 276; these read TID, MGR, and HIQR. Residue aspartate 128 is the Proton acceptor of the active site.

Belongs to the phosphofructokinase type A (PFKA) family. Mixed-substrate PFK group III subfamily. In terms of assembly, homodimer or homotetramer. It depends on Mg(2+) as a cofactor.

Its subcellular location is the cytoplasm. It catalyses the reaction beta-D-fructose 6-phosphate + ATP = beta-D-fructose 1,6-bisphosphate + ADP + H(+). The catalysed reaction is D-tagatofuranose 6-phosphate + ATP = D-tagatofuranose 1,6-bisphosphate + ADP + H(+). The protein operates within carbohydrate degradation; glycolysis; D-glyceraldehyde 3-phosphate and glycerone phosphate from D-glucose: step 3/4. In terms of biological role, catalyzes the phosphorylation of D-fructose 6-phosphate to fructose 1,6-bisphosphate by ATP, the first committing step of glycolysis. Can also catalyze the phosphorylation of tagatose-6-phosphate. This Mycobacterium tuberculosis (strain CDC 1551 / Oshkosh) protein is ATP-dependent 6-phosphofructokinase.